A 226-amino-acid polypeptide reads, in one-letter code: Small ribosomal subunit protein uS3 (226 aa).

A KH type-2 domain is found at 36-104 (IRKYLENRLS…KIQINIFEIK (69 aa)).

The protein belongs to the universal ribosomal protein uS3 family. Part of the 30S ribosomal subunit. Forms a tight complex with proteins S10 and S14.

In terms of biological role, binds the lower part of the 30S subunit head. Binds mRNA in the 70S ribosome, positioning it for translation. The sequence is that of Small ribosomal subunit protein uS3 from Karelsulcia muelleri (strain GWSS) (Sulcia muelleri).